We begin with the raw amino-acid sequence, 475 residues long: Ribulose bisphosphate carboxylase large chain (475 aa).

A propeptide spanning residues 1-2 is cleaved from the precursor; sequence MS. Pro3 is subject to N-acetylproline. The residue at position 14 (Lys14) is an N6,N6,N6-trimethyllysine. Substrate-binding residues include Asn123 and Thr173. The active-site Proton acceptor is the Lys175. A substrate-binding site is contributed by Lys177. Mg(2+) is bound by residues Lys201, Asp203, and Glu204. Lys201 carries the post-translational modification N6-carboxylysine. His294 acts as the Proton acceptor in catalysis. 3 residues coordinate substrate: Arg295, His327, and Ser379.

It belongs to the RuBisCO large chain family. Type I subfamily. In terms of assembly, heterohexadecamer of 8 large chains and 8 small chains; disulfide-linked. The disulfide link is formed within the large subunit homodimers. It depends on Mg(2+) as a cofactor. The disulfide bond which can form in the large chain dimeric partners within the hexadecamer appears to be associated with oxidative stress and protein turnover.

The protein localises to the plastid. The protein resides in the chloroplast. It catalyses the reaction 2 (2R)-3-phosphoglycerate + 2 H(+) = D-ribulose 1,5-bisphosphate + CO2 + H2O. The enzyme catalyses D-ribulose 1,5-bisphosphate + O2 = 2-phosphoglycolate + (2R)-3-phosphoglycerate + 2 H(+). RuBisCO catalyzes two reactions: the carboxylation of D-ribulose 1,5-bisphosphate, the primary event in carbon dioxide fixation, as well as the oxidative fragmentation of the pentose substrate in the photorespiration process. Both reactions occur simultaneously and in competition at the same active site. The polypeptide is Ribulose bisphosphate carboxylase large chain (Eucalyptus globulus subsp. globulus (Tasmanian blue gum)).